The following is a 542-amino-acid chain: Formate--tetrahydrofolate ligase (542 aa).

Position 53–60 (53–60) interacts with ATP; that stretch reads TPAGEGKT.

The protein belongs to the formate--tetrahydrofolate ligase family.

The enzyme catalyses (6S)-5,6,7,8-tetrahydrofolate + formate + ATP = (6R)-10-formyltetrahydrofolate + ADP + phosphate. It functions in the pathway one-carbon metabolism; tetrahydrofolate interconversion. The chain is Formate--tetrahydrofolate ligase from Thermotoga maritima (strain ATCC 43589 / DSM 3109 / JCM 10099 / NBRC 100826 / MSB8).